Reading from the N-terminus, the 396-residue chain is Tryptophan synthase beta chain (396 aa).

K86 bears the N6-(pyridoxal phosphate)lysine mark.

This sequence belongs to the TrpB family. As to quaternary structure, tetramer of two alpha and two beta chains. It depends on pyridoxal 5'-phosphate as a cofactor.

The enzyme catalyses (1S,2R)-1-C-(indol-3-yl)glycerol 3-phosphate + L-serine = D-glyceraldehyde 3-phosphate + L-tryptophan + H2O. It functions in the pathway amino-acid biosynthesis; L-tryptophan biosynthesis; L-tryptophan from chorismate: step 5/5. Its function is as follows. The beta subunit is responsible for the synthesis of L-tryptophan from indole and L-serine. This Pectobacterium atrosepticum (strain SCRI 1043 / ATCC BAA-672) (Erwinia carotovora subsp. atroseptica) protein is Tryptophan synthase beta chain.